The sequence spans 490 residues: V-type proton ATPase subunit B (490 aa).

Arg380 provides a ligand contact to ATP.

This sequence belongs to the ATPase alpha/beta chains family. V-ATPase is a heteromultimeric enzyme made up of two complexes: the ATP-hydrolytic V1 complex and the proton translocation V0 complex. The V1 complex consists of three catalytic AB heterodimers that form a heterohexamer, three peripheral stalks each consisting of EG heterodimers, one central rotor including subunits D and F, and the regulatory subunits C and H. The proton translocation complex V0 consists of the proton transport subunit a, a ring of proteolipid subunits c9c'', rotary subunit d, subunits e and f, and the accessory subunits VhaAC45 and ATP6AP2. As to expression, expressed in Malpighian tubules, rectum, antennal palps and oviduct.

In terms of biological role, non-catalytic subunit of the V1 complex of vacuolar(H+)-ATPase (V-ATPase), a multisubunit enzyme composed of a peripheral complex (V1) that hydrolyzes ATP and a membrane integral complex (V0) that translocates protons. V-ATPase is responsible for acidifying and maintaining the pH of intracellular compartments and in some cell types, is targeted to the plasma membrane, where it is responsible for acidifying the extracellular environment. Essential for the proper assembly and activity of V-ATPase. The polypeptide is V-type proton ATPase subunit B (Vha55) (Drosophila melanogaster (Fruit fly)).